The following is a 116-amino-acid chain: M-zodatoxin-Lt6a/c (116 aa).

The first 22 residues, 1–22, serve as a signal peptide directing secretion; sequence MKYFVVALTLAVAFVCIEECKT. 2 propeptides span residues 23–44 and 80–83; these read VEIGYAVSEDFDQNEIDNDEAR and EEAR. 2 short sequence motifs (processing quadruplet motif) span residues 41–44 and 80–83; these read DEAR and EEAR. At Gln84 the chain carries Pyrrolidone carboxylic acid.

It belongs to the cationic peptide 03 (latarcin) family. 06 subfamily. In terms of processing, cleavage of the propeptide depends on the processing quadruplet motif (XXXR, with at least one of X being E). As to expression, expressed by the venom gland.

Its subcellular location is the secreted. Functionally, does not have antimicrobial activity against Gram-positive bacteria (A.globiformis VKM Ac-1112 (MIC&gt;70 uM) and B.subtilis VKM B-501 (MIC&gt;70 uM)), Gram-negative bacteria (E.coli DH5-alpha (MIC&gt;70 uM), E.coli MH1 (MIC&gt;70 uM) and P.aeruginosa PAO1 (MIC&gt;70 uM)), yeast (P.pastoris GS115 (MIC&gt;70 uM) or S.cerevisiae Y190 (MIC&gt;70 uM)). Does not have hemolytic activity against rabbit erythrocytes. However, it causes some conductance changes in planar bilayer membranes, without membrane rupture, suggesting a cytolytic function on other biological targets. It causes paralysis, but is not lethal when injected into insect larvae. This chain is M-zodatoxin-Lt6a/c, found in Lachesana tarabaevi (Spider).